The following is a 395-amino-acid chain: Putative 8-amino-7-oxononanoate synthase (395 aa).

R23 lines the substrate pocket. Position 110–111 (110–111 (GF)) interacts with pyridoxal 5'-phosphate. Residue H135 participates in substrate binding. Pyridoxal 5'-phosphate contacts are provided by residues S182, 207–210 (DEAH), and 239–242 (TFSK). K242 carries the post-translational modification N6-(pyridoxal phosphate)lysine. T356 serves as a coordination point for substrate.

Belongs to the class-II pyridoxal-phosphate-dependent aminotransferase family. BioF subfamily. As to quaternary structure, homodimer. It depends on pyridoxal 5'-phosphate as a cofactor.

It catalyses the reaction 6-carboxyhexanoyl-[ACP] + L-alanine + H(+) = (8S)-8-amino-7-oxononanoate + holo-[ACP] + CO2. It participates in cofactor biosynthesis; biotin biosynthesis. In terms of biological role, catalyzes the decarboxylative condensation of pimeloyl-[acyl-carrier protein] and L-alanine to produce 8-amino-7-oxononanoate (AON), [acyl-carrier protein], and carbon dioxide. The protein is Putative 8-amino-7-oxononanoate synthase (bioF) of Bacillus thuringiensis subsp. konkukian (strain 97-27).